Reading from the N-terminus, the 282-residue chain is MTVIDGKALGVKLQAALAEKTARLKEEKGLVPGLVVILVGENPASQVYVRNKERSALAAGFKSEVVRVPDTISESDLLDLIERYNQDDEWHGILVQLPLPAHISEEKVLLAIDPDKDVDGFHPTNMGKFWSGHPVMIPSTPAGIMEMFKEYQIELEGKSALVIGRSNIVGKPMAQLLLDADATVTIAHSRTKNLPDLARQADILVVAIGRGHFVTKEFVKLGAVVIDVGMNRDENGKLIGDVKYDEVSEVASYITPVPGGVGPMTITMLMEQTYEACVRSAK.

NADP(+) contacts are provided by residues 164–166 and Ser-189; that span reads GRS.

Belongs to the tetrahydrofolate dehydrogenase/cyclohydrolase family. In terms of assembly, homodimer.

It carries out the reaction (6R)-5,10-methylene-5,6,7,8-tetrahydrofolate + NADP(+) = (6R)-5,10-methenyltetrahydrofolate + NADPH. The enzyme catalyses (6R)-5,10-methenyltetrahydrofolate + H2O = (6R)-10-formyltetrahydrofolate + H(+). It functions in the pathway one-carbon metabolism; tetrahydrofolate interconversion. In terms of biological role, catalyzes the oxidation of 5,10-methylenetetrahydrofolate to 5,10-methenyltetrahydrofolate and then the hydrolysis of 5,10-methenyltetrahydrofolate to 10-formyltetrahydrofolate. This Streptococcus suis (strain 05ZYH33) protein is Bifunctional protein FolD.